Consider the following 102-residue polypeptide: Small ribosomal subunit protein uS10 (102 aa).

A disordered region spans residues 33 to 59 (RMSGPIPLPTKRIRITTRKSPDGEGSA).

This sequence belongs to the universal ribosomal protein uS10 family. Part of the 30S ribosomal subunit.

Involved in the binding of tRNA to the ribosomes. The protein is Small ribosomal subunit protein uS10 of Pyrococcus furiosus (strain ATCC 43587 / DSM 3638 / JCM 8422 / Vc1).